The sequence spans 639 residues: Chaperone protein HtpG (639 aa).

Positions 1 to 343 (MEATATKEHL…SNDLPLNVSR (343 aa)) are a; substrate-binding. The b stretch occupies residues 344-564 (EILQESKDIE…THDMSGNLER (221 aa)). The interval 565–639 (LLKSAGQKVT…QLFLSTGSKE (75 aa)) is c.

It belongs to the heat shock protein 90 family. In terms of assembly, homodimer.

It is found in the cytoplasm. Functionally, molecular chaperone. Has ATPase activity. The chain is Chaperone protein HtpG from Nitrosospira multiformis (strain ATCC 25196 / NCIMB 11849 / C 71).